A 199-amino-acid chain; its full sequence is Protein shisa-like-1 (199 aa).

The first 25 residues, 1-25 (MTSCGQQSLNVLAVLFSLLFSAVLS), serve as a signal peptide directing secretion. At 26–97 (AHFRVCEPYT…SEGYMHNNYT (72 aa)) the chain is on the extracellular side. N-linked (GlcNAc...) asparagine glycosylation is found at Asn53 and Asn95. Residues 98 to 118 (ALLGVWIYGFFVLMLLVLDLL) traverse the membrane as a helical segment. Over 119–199 (YYSAMNYDIC…PLMTFQSSSA (81 aa)) the chain is Cytoplasmic. The segment at 146-199 (PRRWGNPARAPRPGQRAPQPQPPPGPLPQAPQAVHTLRGDAHSPPLMTFQSSSA) is disordered. Residues 152–163 (PARAPRPGQRAP) show a composition bias toward low complexity. Residues 164-174 (QPQPPPGPLPQ) are compositionally biased toward pro residues.

Belongs to the shisa family.

Its subcellular location is the membrane. The protein is Protein shisa-like-1 of Homo sapiens (Human).